We begin with the raw amino-acid sequence, 378 residues long: tRNA-specific 2-thiouridylase MnmA (378 aa).

Residues 14–21 (AMSGGVDS) and leucine 40 contribute to the ATP site. Cysteine 109 (nucleophile) is an active-site residue. Cysteine 109 and cysteine 208 are joined by a disulfide. Residue glycine 133 coordinates ATP. The segment at 156-158 (KDQ) is interaction with tRNA. Cysteine 208 acts as the Cysteine persulfide intermediate in catalysis.

The protein belongs to the MnmA/TRMU family.

The protein localises to the cytoplasm. It carries out the reaction S-sulfanyl-L-cysteinyl-[protein] + uridine(34) in tRNA + AH2 + ATP = 2-thiouridine(34) in tRNA + L-cysteinyl-[protein] + A + AMP + diphosphate + H(+). Catalyzes the 2-thiolation of uridine at the wobble position (U34) of tRNA, leading to the formation of s(2)U34. The polypeptide is tRNA-specific 2-thiouridylase MnmA (Streptomyces griseus subsp. griseus (strain JCM 4626 / CBS 651.72 / NBRC 13350 / KCC S-0626 / ISP 5235)).